The primary structure comprises 459 residues: Glycosyl hydrolase family 109 protein (459 aa).

A signal peptide (tat-type signal) is located at residues 1-31 (MHNIHRRNFLKAAGAATAGLVTANIALNAYA). Residues 64–65 (ER), Asp-86, 135–138 (WEWH), 155–156 (EV), and Asn-184 each bind NAD(+). Residues Tyr-213, Arg-232, 244–247 (YPTH), and Tyr-326 each bind substrate. Tyr-244 serves as a coordination point for NAD(+).

This sequence belongs to the Gfo/Idh/MocA family. Glycosyl hydrolase 109 subfamily. NAD(+) is required as a cofactor. Predicted to be exported by the Tat system. The position of the signal peptide cleavage has not been experimentally proven.

Its function is as follows. Glycosidase. The sequence is that of Glycosyl hydrolase family 109 protein from Shewanella baltica (strain OS195).